A 193-amino-acid polypeptide reads, in one-letter code: Large ribosomal subunit protein bL17m (193 aa).

Belongs to the bacterial ribosomal protein bL17 family. In terms of assembly, component of the mitochondrial large ribosomal subunit (mt-LSU). Mature N.crassa 74S mitochondrial ribosomes consist of a small (37S) and a large (54S) subunit. The 37S small subunit contains a 16S ribosomal RNA (16S mt-rRNA) and 32 different proteins. The 54S large subunit contains a 23S rRNA (23S mt-rRNA) and 42 different proteins.

It is found in the mitochondrion. Its function is as follows. Component of the mitochondrial ribosome (mitoribosome), a dedicated translation machinery responsible for the synthesis of mitochondrial genome-encoded proteins, including at least some of the essential transmembrane subunits of the mitochondrial respiratory chain. The mitoribosomes are attached to the mitochondrial inner membrane and translation products are cotranslationally integrated into the membrane. The polypeptide is Large ribosomal subunit protein bL17m (mrpl8) (Neurospora crassa (strain ATCC 24698 / 74-OR23-1A / CBS 708.71 / DSM 1257 / FGSC 987)).